The sequence spans 483 residues: Glutamate--tRNA ligase (483 aa).

The 'HIGH' region motif lies at 11 to 21; that stretch reads PSPTGHLHIGN. Residues Cys-108, Cys-110, His-135, and Asp-137 each contribute to the Zn(2+) site. A 'KMSKS' region motif is present at residues 252–256; the sequence is KLSKR. ATP is bound at residue Lys-255.

It belongs to the class-I aminoacyl-tRNA synthetase family. Glutamate--tRNA ligase type 1 subfamily. Monomer. The cofactor is Zn(2+).

The protein localises to the cytoplasm. The enzyme catalyses tRNA(Glu) + L-glutamate + ATP = L-glutamyl-tRNA(Glu) + AMP + diphosphate. Functionally, catalyzes the attachment of glutamate to tRNA(Glu) in a two-step reaction: glutamate is first activated by ATP to form Glu-AMP and then transferred to the acceptor end of tRNA(Glu). This is Glutamate--tRNA ligase from Bacillus subtilis (strain 168).